A 172-amino-acid polypeptide reads, in one-letter code: Large ribosomal subunit protein uL10 (172 aa).

The protein belongs to the universal ribosomal protein uL10 family. In terms of assembly, part of the ribosomal stalk of the 50S ribosomal subunit. The N-terminus interacts with L11 and the large rRNA to form the base of the stalk. The C-terminus forms an elongated spine to which L12 dimers bind in a sequential fashion forming a multimeric L10(L12)X complex.

Functionally, forms part of the ribosomal stalk, playing a central role in the interaction of the ribosome with GTP-bound translation factors. The chain is Large ribosomal subunit protein uL10 from Prosthecochloris aestuarii (strain DSM 271 / SK 413).